The sequence spans 771 residues: Transcription factor TAS2 (771 aa).

A disordered region spans residues 33 to 53 (RSRAESASGPQQPSRRQPQTS). Residues 42–51 (PQQPSRRQPQ) are compositionally biased toward low complexity. Positions 54 to 80 (CDLCRSRKIKCDRGTPCGNCRTRGLAC) form a DNA-binding region, zn(2)-C6 fungal-type. Residues 125–150 (AVGGSGNAENGAHGDATPRVPLSGLE) are disordered.

It localises to the nucleus. Its function is as follows. Transcription factor; part of the gene cluster that mediates the biosynthesis of the toxin tenuazonic acid (TeA), an inhibitor of protein biosynthesis on ribosomes by suppressing the release of new protein. Directly regulates the expression of the hybrid PKS-NRPS synthetase TAS1 and the subsequent production of TeA. In Pyricularia oryzae (strain 70-15 / ATCC MYA-4617 / FGSC 8958) (Rice blast fungus), this protein is Transcription factor TAS2.